Here is a 693-residue protein sequence, read N- to C-terminus: Protein-glutamine gamma-glutamyltransferase E (693 aa).

At Ala2 the chain carries N-acetylalanine. Tyr111 is subject to Phosphotyrosine. Thr112 carries the phosphothreonine modification. Ca(2+) is bound by residues Ala222, Asn225, Asn227, Asp228, and Asn230. Cys273 is an active-site residue. Residues Asp302, Asp304, Asn306, Ser308, and Asp325 each contribute to the Ca(2+) site. Residues His331 and Asp354 contribute to the active site. Ca(2+) contacts are provided by Asn394, Ser416, Glu444, and Glu449.

Belongs to the transglutaminase superfamily. Transglutaminase family. Consists of two polypeptide chains, which are synthesized as a precursor form of a single polypeptide. Ca(2+) is required as a cofactor. Activated by proteolytic processing. In vitro activation is commonly achieved by cleavage with dispase, a neutral bacterial protease. Dispase cleavage site was proposed to lie between Ser-470 and Ser-471 or between Pro-465 and Phe-466. Physiological activation may be catalyzed by CTSL and, to a lesser extent, by CTSS, but not by CTSB, CTSD nor CTSV.

Its subcellular location is the cytoplasm. The enzyme catalyses L-glutaminyl-[protein] + L-lysyl-[protein] = [protein]-L-lysyl-N(6)-5-L-glutamyl-[protein] + NH4(+). Functionally, catalyzes the calcium-dependent formation of isopeptide cross-links between glutamine and lysine residues in various proteins, as well as the conjugation of polyamines to proteins. Involved in the formation of the cornified envelope (CE), a specialized component consisting of covalent cross-links of proteins beneath the plasma membrane of terminally differentiated keratinocytes. Catalyzes small proline-rich proteins (SPRR1 and SPRR2) and LOR cross-linking to form small interchain oligomers, which are further cross-linked by TGM1 onto the growing CE scaffold. In hair follicles, involved in cross-linking structural proteins to hardening the inner root sheath. The polypeptide is Protein-glutamine gamma-glutamyltransferase E (TGM3) (Homo sapiens (Human)).